The primary structure comprises 139 residues: HTH-type transcriptional regulator MntR (139 aa).

Residues 1–63 (MPTPSMEDHI…YEKYRGLTLT (63 aa)) enclose the HTH dtxR-type domain. Positions 8, 11, 77, 99, 102, and 103 each coordinate Mn(2+).

The protein belongs to the DtxR/MntR family. As to quaternary structure, homodimer.

Its subcellular location is the cytoplasm. Its activity is regulated as follows. DNA binding is strongly activated by Mn(2+). Functionally, central regulator of manganese homeostasis. In Lysinibacillus sphaericus (strain C3-41), this protein is HTH-type transcriptional regulator MntR.